The following is a 96-amino-acid chain: Co-chaperonin GroES (96 aa).

It belongs to the GroES chaperonin family. In terms of assembly, heptamer of 7 subunits arranged in a ring. Interacts with the chaperonin GroEL.

The protein resides in the cytoplasm. Functionally, together with the chaperonin GroEL, plays an essential role in assisting protein folding. The GroEL-GroES system forms a nano-cage that allows encapsulation of the non-native substrate proteins and provides a physical environment optimized to promote and accelerate protein folding. GroES binds to the apical surface of the GroEL ring, thereby capping the opening of the GroEL channel. In Haemophilus influenzae (strain ATCC 51907 / DSM 11121 / KW20 / Rd), this protein is Co-chaperonin GroES.